A 1872-amino-acid chain; its full sequence is Histone acetyltransferase KAT6B (1872 aa).

The region spanning 1–77 is the SAMD1-like winged helix (WH) domain; it reads MVKLANPLYT…LASYKDPDNP (77 aa). Disordered stretches follow at residues 70–103 and 168–207; these read SYKD…CNDL and KEGP…HEKD. The H15 domain occupies 104 to 177; that stretch reads RNVDWNKLLK…KEGPQYRVNS (74 aa). Residues 189-202 are compositionally biased toward low complexity; it reads PSAFPSSLPPVSLL. PHD-type zinc fingers lie at residues 214–273 and 270–321; these read IPIC…CKTC and CKTC…CRPK. The residue at position 356 (S356) is a Phosphoserine. The disordered stretch occupies residues 361–417; that stretch reads EGSMSAFTGRGSPGRGQKTKVSTTPSSGHAASGKHSSSRLAVTDPTRPGATTKTTTS. The segment at 362-535 is negatively regulates HAT activity; sequence GSMSAFTGRG…ECESGVEDCG (174 aa). Residues 386–395 are compositionally biased toward low complexity; the sequence is SSGHAASGKH. K491 participates in a covalent cross-link: Glycyl lysine isopeptide (Lys-Gly) (interchain with G-Cter in SUMO2). One can recognise an MYST-type HAT domain in the interval 533–807; sequence DCGRYPSVIE…LDPESLRWTP (275 aa). A catalytic region spans residues 536–826; sequence RYPSVIEFGK…EEEREAEKEA (291 aa). A C2HC MYST-type zinc finger spans residues 566–591; that stretch reads LYLCEFCLKYMKSKNILLRHSKKCGW. The segment at 570–826 is interaction with BRPF1; it reads EFCLKYMKSK…EEEREAEKEA (257 aa). An N6-acetyllysine; by autocatalysis modification is found at K633. Acetyl-CoA contacts are provided by residues 674–678 and 683–689; these read SCIMI and QRQGFGR. E709 serves as the catalytic Proton donor/acceptor. S713 serves as a coordination point for acetyl-CoA. Residues 846–860 show a composition bias toward low complexity; it reads SRVSSRQSSAKVQSK. Disordered regions lie at residues 846-1018, 1031-1252, 1283-1358, and 1388-1418; these read SRVS…NHFF, DAEH…FKDA, MSCN…DDTF, and DECQ…SPSV. K856, K860, and K862 each carry N6-acetyllysine. At S866 the chain carries Phosphoserine. The span at 887-909 shows a compositional bias: acidic residues; that stretch reads SEEEEEEEEEDDEEEEEEEEEES. The span at 910–924 shows a compositional bias: polar residues; that stretch reads IQTSPPRLTKPQSVS. Over residues 925–944 the composition is skewed to basic residues; that stretch reads IKRKRPFVVKKKRGRKRRRI. The segment covering 946–959 has biased composition (low complexity); the sequence is SSVTTETISETTEV. Residues 991-1004 are compositionally biased toward basic residues; it reads PVLRKAFPHQPGKK. 2 stretches are compositionally biased toward basic and acidic residues: residues 1031–1047 and 1094–1114; these read DAEH…EPLK and EEQK…REVT. Residues 1155-1176 are compositionally biased toward acidic residues; it reads EEGEEEGEEEGEREEQEEEEEV. Residues 1177–1207 show a composition bias toward basic and acidic residues; it reads TTEKDLDGAKSKENPEPEISMEKEDPVHLGD. The segment covering 1208–1217 has biased composition (acidic residues); sequence HEEDEDEEEE. 2 stretches are compositionally biased toward basic and acidic residues: residues 1238 to 1252 and 1310 to 1320; these read NMER…FKDA and QTQKQDQKNSD. The segment covering 1339 to 1349 has biased composition (polar residues); sequence ETAQAVQSLTQ. The interaction with RUNX1 and RUNX2 stretch occupies residues 1359 to 1872; that stretch reads PDCAETQEAC…QSLNGSYMRR (514 aa). The segment covering 1393–1410 has biased composition (low complexity); it reads SDHSSPVSSVHSHPGQSV.

This sequence belongs to the MYST (SAS/MOZ) family. Component of the MOZ/MORF complex composed at least of ING5, KAT6A, KAT6B, MEAF6 and one of BRPF1, BRD1/BRPF2 and BRPF3. Interacts with RUNX1 and RUNX2. Autoacetylation at Lys-633 is required for proper function. As to expression, ubiquitously expressed.

It is found in the nucleus. It catalyses the reaction L-lysyl-[protein] + acetyl-CoA = N(6)-acetyl-L-lysyl-[protein] + CoA + H(+). Histone acetyltransferase which may be involved in both positive and negative regulation of transcription. Required for RUNX2-dependent transcriptional activation. Component of the MOZ/MORF complex which has a histone H3 acetyltransferase activity. Involved in cerebral cortex development. In Mus musculus (Mouse), this protein is Histone acetyltransferase KAT6B (Kat6b).